Consider the following 165-residue polypeptide: Protein SprT (165 aa).

The SprT-like domain maps to leucine 22 to valine 163. Histidine 78 provides a ligand contact to Zn(2+). The active site involves glutamate 79. Histidine 82 contacts Zn(2+).

It belongs to the SprT family. The cofactor is Zn(2+).

The protein localises to the cytoplasm. The protein is Protein SprT of Shigella dysenteriae serotype 1 (strain Sd197).